The following is a 246-amino-acid chain: DNA polymerase sliding clamp (246 aa).

This sequence belongs to the PCNA family. In terms of assembly, homotrimer. The subunits circularize to form a toroid; DNA passes through its center. Replication factor C (RFC) is required to load the toroid on the DNA.

Functionally, sliding clamp subunit that acts as a moving platform for DNA processing. Responsible for tethering the catalytic subunit of DNA polymerase and other proteins to DNA during high-speed replication. The polypeptide is DNA polymerase sliding clamp (Thermoplasma volcanium (strain ATCC 51530 / DSM 4299 / JCM 9571 / NBRC 15438 / GSS1)).